The following is a 347-amino-acid chain: WAT1-related protein At4g15540 (347 aa).

A run of 10 helical transmembrane segments spans residues 15–35 (VVPFTAMIAIECTTVGSSILY), 47–67 (VFVFYAYVGATLVLLLLSLIF), 73–93 (LPTAKSSLFFKIFLLALLGLT), 108–128 (TLSSAISNLTPAFTFILAIFF), 139–159 (ATQAKIIGTIVSISGALVIVL), 178–198 (WIIGGLLLGLQFLLLSVWFIL), 210–230 (IAVVFCYNLCATLISGTVCLL), 243–263 (GFSLASVIYSGLFDTSLGSVI), 276–296 (ISLFKPLSIAIAVAMAAIFLG), and 299–319 (LHLGSVIGSVILSFGFYTVIW). Residues 30-158 (GSSILYKAAT…VSISGALVIV (129 aa)) form the EamA 1 domain. Residues 216–317 (YNLCATLISG…VILSFGFYTV (102 aa)) enclose the EamA 2 domain.

Belongs to the drug/metabolite transporter (DMT) superfamily. Plant drug/metabolite exporter (P-DME) (TC 2.A.7.4) family.

Its subcellular location is the membrane. This chain is WAT1-related protein At4g15540, found in Arabidopsis thaliana (Mouse-ear cress).